The sequence spans 518 residues: MFS-type transporter cnsO (518 aa).

Over residues 1 to 13 (MESTDSSPPLSMT) the composition is skewed to polar residues. The interval 1–24 (MESTDSSPPLSMTDTEKKGDAVTT) is disordered. Transmembrane regions (helical) follow at residues 99–119 (LALM…NIML), 122–142 (VGPK…TTLT), 156–176 (LMLG…LSMW), 187–207 (AIFY…AYGV), 221–241 (WLFL…LFCL), 298–318 (FMMM…SYTL), 334–354 (VMTT…GYIS), 362–382 (LCIM…WITV), and 392–412 (YFAI…VGAW). The N-linked (GlcNAc...) asparagine glycan is linked to asparagine 416. 2 helical membrane passes run 427–447 (IGLL…NIYI) and 455–475 (PLGF…PATI).

This sequence belongs to the major facilitator superfamily.

The protein localises to the cell membrane. Functionally, MFS-type transporter; part of the gene cluster that mediates the biosynthesis of communesins, a prominent class of indole alkaloids with great potential as pharmaceuticals. With the MFS transporter cnsL, is most likely responsible for cummunesins secretion and thereby may contribute to intrinsic resistance. This chain is MFS-type transporter cnsO, found in Penicillium expansum (Blue mold rot fungus).